Consider the following 233-residue polypeptide: Demethylmenaquinone methyltransferase (233 aa).

Residues Thr60, Asp81, and 106–107 (DA) each bind S-adenosyl-L-methionine.

The protein belongs to the class I-like SAM-binding methyltransferase superfamily. MenG/UbiE family.

The catalysed reaction is a 2-demethylmenaquinol + S-adenosyl-L-methionine = a menaquinol + S-adenosyl-L-homocysteine + H(+). Its pathway is quinol/quinone metabolism; menaquinone biosynthesis; menaquinol from 1,4-dihydroxy-2-naphthoate: step 2/2. In terms of biological role, methyltransferase required for the conversion of demethylmenaquinol (DMKH2) to menaquinol (MKH2). This Staphylococcus saprophyticus subsp. saprophyticus (strain ATCC 15305 / DSM 20229 / NCIMB 8711 / NCTC 7292 / S-41) protein is Demethylmenaquinone methyltransferase.